We begin with the raw amino-acid sequence, 515 residues long: Histidine ammonia-lyase (515 aa).

A cross-link (5-imidazolinone (Ala-Gly)) is located at residues 142-144 (ASG). Serine 143 bears the 2,3-didehydroalanine (Ser) mark.

It belongs to the PAL/histidase family. Post-translationally, contains an active site 4-methylidene-imidazol-5-one (MIO), which is formed autocatalytically by cyclization and dehydration of residues Ala-Ser-Gly.

The protein resides in the cytoplasm. It catalyses the reaction L-histidine = trans-urocanate + NH4(+). It participates in amino-acid degradation; L-histidine degradation into L-glutamate; N-formimidoyl-L-glutamate from L-histidine: step 1/3. This is Histidine ammonia-lyase from Bradyrhizobium sp. (strain BTAi1 / ATCC BAA-1182).